The sequence spans 292 residues: Syntaxin-19 (292 aa).

Over residues 1-24 the composition is skewed to basic and acidic residues; it reads MKDRLPELKQRTKETELSKDKDVP. The tract at residues 1–28 is disordered; it reads MKDRLPELKQRTKETELSKDKDVPTTEA. Residues 46-122 are a coiled coil; sequence VAERHLHEIQ…VKEVKKSEDE (77 aa). One can recognise a t-SNARE coiled-coil homology domain in the interval 209–271; it reads LSEIEQRHKE…NTTKEKFGLA (63 aa).

It belongs to the syntaxin family. In terms of assembly, interacts with EGFR.

The protein resides in the cell membrane. It is found in the cytoplasm. Plays a role in endosomal trafficking of the epidermal growth factor receptor (EGFR). This Bos taurus (Bovine) protein is Syntaxin-19 (STX19).